Here is a 263-residue protein sequence, read N- to C-terminus: Ycf3-interacting protein 1, chloroplastic (263 aa).

Residues 1–71 (MASNMLQLSL…VNKEEDSATY (71 aa)) constitute a chloroplast transit peptide. Residues 238-258 (ALYLVSAFPIIIGISVVLILF) traverse the membrane as a helical segment.

It belongs to the Y3IP1/CEST family. In terms of assembly, interacts with Ycf3.

The protein resides in the plastid. Its subcellular location is the chloroplast thylakoid membrane. In terms of biological role, nuclear genome-encoded factor that participates in photosystem I (PSI) biogenesis. Cooperates with the plastid genome-encoded protein PSI assembly Ycf3 in the assembly of stable PSI units in the thylakoid membrane. The sequence is that of Ycf3-interacting protein 1, chloroplastic from Nicotiana tabacum (Common tobacco).